A 277-amino-acid polypeptide reads, in one-letter code: Co-chaperone protein DjlA (277 aa).

The Periplasmic segment spans residues 1–4 (MWGK). The chain crosses the membrane as a helical span at residues 5–28 (ILGAFFGFLLGGPFGLLLGLFLGH). Residues 29–277 (KFDKARRNVY…DMIRKEKGFK (249 aa)) are Cytoplasmic-facing. Positions 211 to 277 (DAYEVLGVTE…DMIRKEKGFK (67 aa)) constitute a J domain.

Homodimer.

The protein localises to the cell inner membrane. In terms of biological role, regulatory DnaK co-chaperone. Direct interaction between DnaK and DjlA is needed for the induction of the wcaABCDE operon, involved in the synthesis of a colanic acid polysaccharide capsule, possibly through activation of the RcsB/RcsC phosphotransfer signaling pathway. The colanic acid capsule may help the bacterium survive conditions outside the host. This chain is Co-chaperone protein DjlA, found in Photobacterium profundum (strain SS9).